Reading from the N-terminus, the 780-residue chain is cGMP-dependent protein kinase egl-4 (780 aa).

2 disordered regions span residues 1 to 55 (MSSG…QVQV) and 119 to 143 (EQKA…DQLG). The segment covering 9 to 35 (SGGGGGGGGASGGAGGGAPGGGGGGIR) has biased composition (gly residues). Polar residues predominate over residues 46 to 55 (DQPNGNQVQV). Residues 61–127 (EAHELQKLIP…LEQKAQSAAS (67 aa)) are a coiled coil. 3',5'-cyclic GMP contacts are provided by residues 265-268 (GELA), 275-276 (RT), arginine 380, 389-392 (GERA), 399-400 (RT), and tyrosine 434. Positions 469 to 729 (VKRLATLGVG…VNDIRKHRWF (261 aa)) constitute a Protein kinase domain. ATP contacts are provided by residues 475-483 (LGVGGFGRV) and lysine 499. The short motif at 492–504 (KAKTFALKALKKK) is the Nuclear localization signal element. Aspartate 593 functions as the Proton acceptor in the catalytic mechanism. Residues 730 to 780 (MGFDWEGLRSRTLKPPILPKVSNPADVTNFDNYPPDNDVPPDEFSGWDEGF) form the AGC-kinase C-terminal domain. The disordered stretch occupies residues 757–780 (TNFDNYPPDNDVPPDEFSGWDEGF).

It belongs to the protein kinase superfamily. AGC Ser/Thr protein kinase family. cGMP subfamily. As to quaternary structure, when phosphorylated, interacts with saeg-2. May interact with saeg-1. The cofactor is Mg(2+). Autophosphorylated. As to expression, expressed in AWC sensory neurons (at protein level). Mainly expressed in head neurons, hypodermis, intestine and body wall muscles. L2 and L3 larvae show extensive expression, lower levels are observed in L4 larvae, later embryos and adults. Isoform c is expressed in a subset of neurons in the head, nerve ring, and ventral nerve cord including some motor neurons, also in several neurons in the tail, the pharyngeal marginal cells, body muscle, intestine, vulval muscles, and spermatheca.

The protein resides in the cytoplasm. Its subcellular location is the nucleus. It catalyses the reaction L-seryl-[protein] + ATP = O-phospho-L-seryl-[protein] + ADP + H(+). The catalysed reaction is L-threonyl-[protein] + ATP = O-phospho-L-threonyl-[protein] + ADP + H(+). With respect to regulation, binding of cGMP results in enzyme activation. Functionally, promotes chemoreceptor gene expression in response to increased cGMP levels by antagonizing the gene repression functions of the class II HDAC hda-4 and the mef-2 transcription factor. Regulates gene expression via recruitment of a histone deacetylase complex containing hda-2, saeg-1 and saeg-2. Represses body size and lifespan through the dbl-1 and insulin pathways, respectively. May also signal through daf-3 and/or daf-5. Role in egg-laying, dauer formation and motility. Regulates behavioral responses to various chemosensory stimuli in sensory neurons. Required for the initiation of long term adaptation to prolonged odor exposure which results in a decrease in odor seeking behavior. May regulate this process by phosphorylating tax-2, a subunit of cyclic nucleotide-gated channel tax-2/tax-4. In ASH sensory neurons, negatively regulates avoidance behavior to some bitter tastants, such as quinine, probably by phosphorylating rgs-2 and rgs-3 which are 2 regulator of G-protein signaling proteins. In AWB sensory neurons, involved in avoidance behavior to some repellent odors. In ASE left (ASEL) sensory neuron, involved in the sensing of environmental alkalinity downstream of receptor-type guanylate cyclase gcy-14. In sensory neurons, involved in the signaling pathway downstream of insulin, TGF-beta and receptor-type guanylate cyclase responsible for inducing quiescence after food intake. Might play a role in aversive olfactory learning in AWC neurons when an odor is associated with food deprivation, depending on the ins-1/age-1 signal from the AIA to the AWC neurons. Probably by regulating neuronal transmission downstream of lin-3 and receptor lin-23 and phospholipase plc-3 in ALA neurons, involved in the decrease in locomotion during the quiescent state that precedes each larval molt. The polypeptide is cGMP-dependent protein kinase egl-4 (Caenorhabditis elegans).